Consider the following 517-residue polypeptide: FAD-dependent monooxygenase dmxR9 (517 aa).

FAD-binding residues include Val96 and Arg162. Residues Arg243 and Tyr270 contribute to the active site. Residues Asp365 and Ala378 each contribute to the FAD site.

This sequence belongs to the paxM FAD-dependent monooxygenase family. Requires FAD as cofactor.

The protein operates within secondary metabolite biosynthesis. FAD-dependent monooxygenase; part of the gene cluster that mediates the biosynthesis of the dimeric xanthones cryptosporioptides. The pathway begins with the synthesis of atrochrysone thioester by the polyketide synthase dmx-nrPKS. The atrochrysone carboxyl ACP thioesterase dmxR1 then breaks the thioester bond and releases the atrochrysone carboxylic acid from dmx-nrPKS. Atrochrysone carboxylic acid is decarboxylated by the decarboxylase dmxR15, and oxidized by the anthrone oxygenase dmxR16 to yield emodin. Emodin is then reduced to emodin hydroquinone by the oxidoreductase dmxR7. A-ring reduction by the short chain dehydrogenase dmxR18, dehydration by the scytalone dehydratase-like protein dmxR17 and probable spontaneous re-oxidation, results in overall deoxygenation to chrysophanol. Baeyer-Villiger oxidation by the Baeyer-Villiger monooxygenase (BVMO) dmxR6 then yields monodictylactone in equilibrium with monodictyphenone. In the case of the cryptosporioptides biosynthesis, monodictylactone is reduced at C-12 to an alcohol (by the short chain dehydrogenases dmxR12 or dmxR8) and hydroxylated at C-5 by dmxR9, yielding the electron-rich aromatic which could eliminate H(2)O to form the ortho-quinonemethide, followed by tautomerisation to paraquinone and complete the formal reduction to produce the 10-methylgroup. Conjugate addition of C-4a-OH to the resulting paraquinone by the monooxygenase dmxR10 then gives cyclohexadienone, which is then reduced at C-5 by the short chain dehydrogenase dmxR3 to give the dihydroxanthone. The 6,7-epoxide in the cryptosporioptides could be introduced by the cytochrome P450 monooxygenase dmxL3. The highly reducing PKS dmxL2 manufactures butyrate, which is further carboxylated by dmxL1 to form ethylmalonate. It is not yet clear whether the carboxylation occurs while the butyrate is attached to the ACP of dmxL2, but this unusual fungal metabolite could then be esterified to O-5 by the O-acetyltransferase dmxR13. Finally, dimerization performed by dmxR5 gives the observed dimers cryptosporioptides A, B and C as the final products of the pathway. This is FAD-dependent monooxygenase dmxR9 from Cryptosporiopsis sp. (strain 8999).